Consider the following 523-residue polypeptide: GMP synthase [glutamine-hydrolyzing] (523 aa).

In terms of domain architecture, Glutamine amidotransferase type-1 spans 8 to 205; sequence KILILDFGSQ…VVNICGCETK (198 aa). The active-site Nucleophile is Cys-85. Catalysis depends on residues His-179 and Glu-181. The region spanning 206-398 is the GMPS ATP-PPase domain; sequence WTAENIIEDA…LGLPAEMINR (193 aa). Position 233–239 (233–239) interacts with ATP; that stretch reads SGGVDSS.

As to quaternary structure, homodimer.

The enzyme catalyses XMP + L-glutamine + ATP + H2O = GMP + L-glutamate + AMP + diphosphate + 2 H(+). It participates in purine metabolism; GMP biosynthesis; GMP from XMP (L-Gln route): step 1/1. Catalyzes the synthesis of GMP from XMP. This Haemophilus influenzae (strain ATCC 51907 / DSM 11121 / KW20 / Rd) protein is GMP synthase [glutamine-hydrolyzing] (guaA).